Consider the following 254-residue polypeptide: Hemin import ATP-binding protein HmuV (254 aa).

The region spanning 2–239 (LNINQVNINL…DTLSQVWHYD (238 aa)) is the ABC transporter domain. 34–41 (GPNGAGKS) serves as a coordination point for ATP.

This sequence belongs to the ABC transporter superfamily. Heme (hemin) importer (TC 3.A.1.14.5) family. As to quaternary structure, the complex is composed of two ATP-binding proteins (HmuV), two transmembrane proteins (HmuU) and a solute-binding protein (HmuT).

It is found in the cell inner membrane. Functionally, part of the ABC transporter complex HmuTUV involved in hemin import. Responsible for energy coupling to the transport system. This chain is Hemin import ATP-binding protein HmuV, found in Shewanella denitrificans (strain OS217 / ATCC BAA-1090 / DSM 15013).